The primary structure comprises 369 residues: Aminomethyltransferase (369 aa).

The protein belongs to the GcvT family. The glycine cleavage system is composed of four proteins: P, T, L and H.

It carries out the reaction N(6)-[(R)-S(8)-aminomethyldihydrolipoyl]-L-lysyl-[protein] + (6S)-5,6,7,8-tetrahydrofolate = N(6)-[(R)-dihydrolipoyl]-L-lysyl-[protein] + (6R)-5,10-methylene-5,6,7,8-tetrahydrofolate + NH4(+). The glycine cleavage system catalyzes the degradation of glycine. The polypeptide is Aminomethyltransferase (Alkaliphilus metalliredigens (strain QYMF)).